A 434-amino-acid polypeptide reads, in one-letter code: AT-rich interactive domain-containing protein 5 (434 aa).

The interval 1–120 (MMADTEMQEQ…SSPHVPEESV (120 aa)) is disordered. Basic and acidic residues-rich tracts occupy residues 25-37 (ELEK…ERPK), 43-54 (DTTHTLDSDVHL), and 78-90 (RNGD…KKIT). Over residues 92-102 (DGGQEETTLGE) the composition is skewed to polar residues. Positions 142–233 (PQDQEAFIKE…ALLEYEKHLR (92 aa)) constitute an ARID domain. Positions 237 to 274 (ELNLPGSASLPSSGIEKEASSHQASGSGRTRRDAAARA) are disordered. One can recognise a sHSP domain in the interval 336–434 (AEVIDVGPPA…RLFVRVPFEQ (99 aa)).

It belongs to the small heat shock protein (HSP20) family.

It is found in the nucleus. In Arabidopsis thaliana (Mouse-ear cress), this protein is AT-rich interactive domain-containing protein 5 (ARID5).